Reading from the N-terminus, the 101-residue chain is ATP synthase subunit c (101 aa).

The next 2 membrane-spanning stretches (helical) occupy residues 35–55 (IGAG…GLIG) and 81–101 (GISE…IFVV).

It belongs to the ATPase C chain family. In terms of assembly, F-type ATPases have 2 components, F(1) - the catalytic core - and F(0) - the membrane proton channel. F(1) has five subunits: alpha(3), beta(3), gamma(1), delta(1), epsilon(1). F(0) has three main subunits: a(1), b(2) and c(10-14). The alpha and beta chains form an alternating ring which encloses part of the gamma chain. F(1) is attached to F(0) by a central stalk formed by the gamma and epsilon chains, while a peripheral stalk is formed by the delta and b chains.

Its subcellular location is the cell membrane. F(1)F(0) ATP synthase produces ATP from ADP in the presence of a proton or sodium gradient. F-type ATPases consist of two structural domains, F(1) containing the extramembraneous catalytic core and F(0) containing the membrane proton channel, linked together by a central stalk and a peripheral stalk. During catalysis, ATP synthesis in the catalytic domain of F(1) is coupled via a rotary mechanism of the central stalk subunits to proton translocation. Functionally, key component of the F(0) channel; it plays a direct role in translocation across the membrane. A homomeric c-ring of between 10-14 subunits forms the central stalk rotor element with the F(1) delta and epsilon subunits. The protein is ATP synthase subunit c of Mycoplasma capricolum subsp. capricolum (strain California kid / ATCC 27343 / NCTC 10154).